The chain runs to 156 residues: Small ribosomal subunit protein uS7 (156 aa).

This sequence belongs to the universal ribosomal protein uS7 family. Part of the 30S ribosomal subunit. Contacts proteins S9 and S11.

Functionally, one of the primary rRNA binding proteins, it binds directly to 16S rRNA where it nucleates assembly of the head domain of the 30S subunit. Is located at the subunit interface close to the decoding center, probably blocks exit of the E-site tRNA. This is Small ribosomal subunit protein uS7 from Oleidesulfovibrio alaskensis (strain ATCC BAA-1058 / DSM 17464 / G20) (Desulfovibrio alaskensis).